A 454-amino-acid polypeptide reads, in one-letter code: Glutamyl-tRNA reductase (454 aa).

Substrate is bound by residues 49-52 (TCNR), Ser109, 114-116 (ETQ), and Gln120. Catalysis depends on Cys50, which acts as the Nucleophile. An NADP(+)-binding site is contributed by 189–194 (GAGKMG).

Belongs to the glutamyl-tRNA reductase family. In terms of assembly, homodimer.

It carries out the reaction (S)-4-amino-5-oxopentanoate + tRNA(Glu) + NADP(+) = L-glutamyl-tRNA(Glu) + NADPH + H(+). The protein operates within porphyrin-containing compound metabolism; protoporphyrin-IX biosynthesis; 5-aminolevulinate from L-glutamyl-tRNA(Glu): step 1/2. Catalyzes the NADPH-dependent reduction of glutamyl-tRNA(Glu) to glutamate 1-semialdehyde (GSA). The protein is Glutamyl-tRNA reductase of Geobacillus kaustophilus (strain HTA426).